Reading from the N-terminus, the 483-residue chain is Protein disulfide-isomerase 5-3 (483 aa).

Residues Asn53, Asn74, and Asn99 are each glycosylated (N-linked (GlcNAc...) asparagine). Residues 133-263 (EETKEEFPDG…IVKMVEGLVA (131 aa)) form the Thioredoxin domain. The Nucleophile role is filled by Cys170. 3 N-linked (GlcNAc...) asparagine glycosylation sites follow: Asn279, Asn326, and Asn376. A helical transmembrane segment spans residues 442 to 462 (FSHFITNLCAIIGGVFTVAGI).

It belongs to the protein disulfide isomerase family. In terms of tissue distribution, widely expressed.

The protein resides in the membrane. Its function is as follows. Acts as a protein-folding catalyst that interacts with nascent polypeptides to catalyze the formation, isomerization, and reduction or oxidation of disulfide bonds. This is Protein disulfide-isomerase 5-3 (PDIL5-3) from Arabidopsis thaliana (Mouse-ear cress).